A 965-amino-acid chain; its full sequence is Chondroitin synthase (965 aa).

The interval 132 to 418 (FTWYKNRKKS…IVKEKVPYIY (287 aa)) is galactosaminyltransferase; A1 domain. UDP-N-acetyl-alpha-D-galactosamine contacts are provided by residues Pro158, Arg162, Asp189, Tyr218, Arg224, and 240–241 (DC). Asp242 is a Mn(2+) binding site. UDP-N-acetyl-alpha-D-galactosamine is bound at residue 362-363 (ED). Residue His387 coordinates Mn(2+). The segment at 419 to 683 (RKLLPIEDSH…ESRKYIFNKT (265 aa)) is glucuronosyltransferase; A2 domain. UDP-alpha-D-glucuronate contacts are provided by residues Tyr442, Asp470, and 518 to 521 (QLDS). Mn(2+) is bound at residue Asp522. UDP-alpha-D-glucuronate contacts are provided by residues His582 and 604–605 (AV). Mn(2+) is bound at residue His632.

This sequence belongs to the glycosyltransferase 2 family. CS/HAS subfamily. It depends on Mn(2+) as a cofactor.

Its subcellular location is the cell membrane. It carries out the reaction 3-O-(beta-D-GlcA-(1-&gt;3)-beta-D-GalNAc-(1-&gt;4)-beta-D-GlcA-(1-&gt;3)-beta-D-Gal-(1-&gt;3)-beta-D-Gal-(1-&gt;4)-beta-D-Xyl)-L-seryl-[protein] + UDP-N-acetyl-alpha-D-galactosamine = 3-O-(beta-D-GalNAc-(1-&gt;4)-beta-D-GlcA-(1-&gt;3)-beta-D-GalNAc-(1-&gt;4)-beta-D-GlcA-(1-&gt;3)-beta-D-Gal-(1-&gt;3)-beta-D-Gal-(1-&gt;4)-beta-D-Xyl)-L-seryl-[protein] + UDP + H(+). The enzyme catalyses 3-O-{beta-D-GlcA-(1-&gt;3)-[beta-D-GalNAc-(1-&gt;4)-beta-D-GlcA-(1-&gt;3)](n)-beta-D-GalNAc-(1-&gt;4)-beta-D-GlcA-(1-&gt;3)-beta-D-Gal-(1-&gt;3)-beta-D-Gal-(1-&gt;4)-beta-D-Xyl}-L-seryl-[protein] + UDP-N-acetyl-alpha-D-galactosamine = 3-O-{[beta-D-GalNAc-(1-&gt;4)-beta-D-GlcA-(1-&gt;3)](n+1)-beta-D-GalNAc-(1-&gt;4)-beta-D-GlcA-(1-&gt;3)-beta-D-Gal-(1-&gt;3)-beta-D-Gal-(1-&gt;4)-beta-D-Xyl}-L-seryl-[protein] + UDP + H(+). The catalysed reaction is 3-O-(beta-D-GalNAc-(1-&gt;4)-beta-D-GlcA-(1-&gt;3)-beta-D-Gal-(1-&gt;3)-beta-D-Gal-(1-&gt;4)-beta-D-Xyl)-L-seryl-[protein] + UDP-alpha-D-glucuronate = 3-O-(beta-D-GlcA-(1-&gt;3)-beta-D-GalNAc-(1-&gt;4)-beta-D-GlcA-(1-&gt;3)-beta-D-Gal-(1-&gt;3)-beta-D-Gal-(1-&gt;4)-beta-D-Xyl)-L-seryl-[protein] + UDP + H(+). It catalyses the reaction 3-O-{[beta-D-GalNAc-(1-&gt;4)-beta-D-GlcA-(1-&gt;3)](n)-beta-D-GalNAc-(1-&gt;4)-beta-D-GlcA-(1-&gt;3)-beta-D-Gal-(1-&gt;3)-beta-D-Gal-(1-&gt;4)-beta-D-Xyl}-L-seryl-[protein] + UDP-alpha-D-glucuronate = 3-O-{beta-D-GlcA-(1-&gt;3)-[beta-D-GalNAc-(1-&gt;4)-beta-D-GlcA-(1-&gt;3)](n)-beta-D-GalNAc-(1-&gt;4)-beta-D-GlcA-(1-&gt;3)-beta-D-Gal-(1-&gt;3)-beta-D-Gal-(1-&gt;4)-beta-D-Xyl}-L-seryl-[protein] + UDP + H(+). Glycosyltransferase that catalyzes elongation of chondroitin, a polysaccharide composed of a repeating disaccharide of N-acetylgalactosamine (GalNAc) and glucuronic acid (GlcUA) units, by alternatively transferring the GlcUA and GalNAc moiety from UDP-GlcUA and UDP-GalNAc to the non-reducing ends of the chondroitin chain. Each chondroitin unit has the composition beta-(1-&gt;4)-GlcUA-beta-(1-&gt;3)-GalNAc. The protein is Chondroitin synthase (fcbD) of Pasteurella multocida (strain Pm70).